Consider the following 189-residue polypeptide: MTVHIHPAVDNGVKKGTGSFAGGTLVCKCSDRPVKVGIKGDVAHNHACGCTKCWKPDGATFSVVAVVPRGNVTVLENGDKLQIVDTSATIQRHACKVCGTHMFGRIENTGHPFYGLDFIHPELFYEQGSAAPEFAAFVSSIIESGVDPAQMPEIRSRLKELGLEPYDCLSPALMDAIAGHIAKTSRKAA.

In terms of domain architecture, CENP-V/GFA spans 20–167 (FAGGTLVCKC…LKELGLEPYD (148 aa)). Positions 27, 29, 48, 50, 53, 95, and 98 each coordinate Zn(2+).

This sequence belongs to the Gfa family. Requires Zn(2+) as cofactor.

The catalysed reaction is S-(hydroxymethyl)glutathione = glutathione + formaldehyde. It participates in one-carbon metabolism; formaldehyde degradation; formate from formaldehyde (glutathione route): step 1/3. Functionally, catalyzes the condensation of formaldehyde and glutathione to S-hydroxymethylglutathione. The protein is Glutathione-dependent formaldehyde-activating enzyme of Rhodopseudomonas palustris (strain BisA53).